Consider the following 359-residue polypeptide: MQAATVVINRRALRHNLQRLRELAPASKLVAVVKANAYGHGLLETARTLPDADAFGVARLEEALRLRAGGITQPILLLEGFFDAADLPTISAQCLHTAVHNQEQLAALEAVELAEPVTVWMKLDTGMHRLGVRPEEAEAFYQRLTHCKNVRQPVNIVSHFARADEPECGATEHQLDIFNAFCQGKPGQRSIAASGGILLWPQSHFDWARPGIILYGVSPLEHKPWGPDFGFQPVMSLTSSLIAVRDHKAGEPVGYGGTWVSERDTRLGVVAMGYGDGYPRAAPSGTPVLVNGREVPIVGRVAMDMICVDLGPNAQDNAGDPVVLWGEGLPVERIAEMTKVSAYELITRLTSRVAMKYID.

The Proton acceptor; specific for D-alanine role is filled by lysine 34. Lysine 34 is subject to N6-(pyridoxal phosphate)lysine. Residue arginine 129 coordinates substrate. Catalysis depends on tyrosine 255, which acts as the Proton acceptor; specific for L-alanine. Methionine 303 provides a ligand contact to substrate.

Belongs to the alanine racemase family. Pyridoxal 5'-phosphate is required as a cofactor.

The enzyme catalyses L-alanine = D-alanine. It participates in amino-acid biosynthesis; D-alanine biosynthesis; D-alanine from L-alanine: step 1/1. The protein operates within cell wall biogenesis; peptidoglycan biosynthesis. Catalyzes the interconversion of L-alanine and D-alanine. Provides the D-alanine required for cell wall biosynthesis. The sequence is that of Alanine racemase, biosynthetic (alr) from Salmonella typhi.